Reading from the N-terminus, the 195-residue chain is MEVHNVELQISAVRPDQYPEQGYPEIALVGRSNVGKSSLTNTLINRKSYARTSSQPGKTQTLNFYRVEDQLFFVDVPGYGYAKVSQKEREKWGKMIEKYITSRKELKGVISLVDARHEPTDDDITMYQYLRYYDIPVLVVATKSDKIARGKWNQHESKIKKALDFDGSSAFQMFSAQTKMGKEEVWKWIEDRMGE.

The region spanning 22-195 (GYPEIALVGR…WKWIEDRMGE (174 aa)) is the EngB-type G domain. GTP contacts are provided by residues 30–37 (GRSNVGKS), 57–61 (GKTQT), 75–78 (DVPG), 142–145 (TKSD), and 173–176 (MFSA). Positions 37 and 59 each coordinate Mg(2+).

The protein belongs to the TRAFAC class TrmE-Era-EngA-EngB-Septin-like GTPase superfamily. EngB GTPase family. Mg(2+) serves as cofactor.

Its function is as follows. Necessary for normal cell division and for the maintenance of normal septation. The sequence is that of Probable GTP-binding protein EngB from Pediococcus pentosaceus (strain ATCC 25745 / CCUG 21536 / LMG 10740 / 183-1w).